Here is a 398-residue protein sequence, read N- to C-terminus: cAMP-dependent protein kinase, catalytic subunit-like (398 aa).

The Protein kinase domain maps to leucine 90–phenylalanine 344. ATP-binding positions include isoleucine 96–valine 104 and lysine 119. The Proton acceptor role is filled by aspartate 213. Positions glutamate 345–tryptophan 398 constitute an AGC-kinase C-terminal domain.

It belongs to the protein kinase superfamily. Ser/Thr protein kinase family. cAMP subfamily.

The enzyme catalyses L-seryl-[protein] + ATP = O-phospho-L-seryl-[protein] + ADP + H(+). The catalysed reaction is L-threonyl-[protein] + ATP = O-phospho-L-threonyl-[protein] + ADP + H(+). This is cAMP-dependent protein kinase, catalytic subunit-like from Caenorhabditis elegans.